The primary structure comprises 88 residues: MKFKPLGERALVKLVEREEKTASGIVLPDTAKEKPQTAEVIAVGDSEDIKVKEGDVVVFAKYSGTEISLNGDDYMILDADDILGVVEE.

The protein belongs to the GroES chaperonin family. In terms of assembly, heptamer of 7 subunits arranged in a ring. Interacts with the chaperonin GroEL.

The protein resides in the cytoplasm. In terms of biological role, together with the chaperonin GroEL, plays an essential role in assisting protein folding. The GroEL-GroES system forms a nano-cage that allows encapsulation of the non-native substrate proteins and provides a physical environment optimized to promote and accelerate protein folding. GroES binds to the apical surface of the GroEL ring, thereby capping the opening of the GroEL channel. In Rubrobacter xylanophilus (strain DSM 9941 / JCM 11954 / NBRC 16129 / PRD-1), this protein is Co-chaperonin GroES.